Reading from the N-terminus, the 29-residue chain is Dermaseptin-9TR (29 aa).

As to expression, expressed by the skin glands.

It localises to the secreted. In terms of biological role, has antimicrobial activity. This is Dermaseptin-9TR from Phyllomedusa trinitatis (Trinidad leaf frog).